The chain runs to 122 residues: Large ribosomal subunit protein uL14 (122 aa).

The protein belongs to the universal ribosomal protein uL14 family. In terms of assembly, part of the 50S ribosomal subunit. Forms a cluster with proteins L3 and L19. In the 70S ribosome, L14 and L19 interact and together make contacts with the 16S rRNA in bridges B5 and B8.

Binds to 23S rRNA. Forms part of two intersubunit bridges in the 70S ribosome. This Clostridium perfringens (strain ATCC 13124 / DSM 756 / JCM 1290 / NCIMB 6125 / NCTC 8237 / Type A) protein is Large ribosomal subunit protein uL14.